Consider the following 488-residue polypeptide: Putative sugar transporter ERD6-like 13 (488 aa).

Transmembrane regions (helical) follow at residues 51-71 (LILL…GTAA), 89-109 (LAEF…GAAM), 116-138 (VFGR…LMIA), 151-171 (LFLG…IVEI), 182-202 (AINS…GSVI), 207-227 (LALI…FIPE), 291-311 (VGIG…TFYL), 324-344 (VGVM…IVIV), 353-373 (LTVA…SFLF), 390-410 (GVLV…WVMI), 423-445 (GTLC…NFLF), and 451-471 (GVFF…MKMV).

This sequence belongs to the major facilitator superfamily. Sugar transporter (TC 2.A.1.1) family.

The protein resides in the membrane. In terms of biological role, sugar transporter. This is Putative sugar transporter ERD6-like 13 from Arabidopsis thaliana (Mouse-ear cress).